We begin with the raw amino-acid sequence, 441 residues long: Protein kinase C and casein kinase substrate in neurons protein 1 (441 aa).

A phosphoserine mark is found at S2 and S76. The F-BAR domain occupies 10–280; that stretch reads EEITDSFWEV…AIRGADAQED (271 aa). Residues 23–272 adopt a coiled-coil conformation; sequence KRTVKRIDDG…HVYRELEQAI (250 aa). The residue at position 181 (T181) is a Phosphothreonine. Positions 310–380 are disordered; that stretch reads AAKKEKQPKK…ANGGANPFED (71 aa). A compositionally biased stretch (basic and acidic residues) spans 311-321; sequence AKKEKQPKKAE. The segment covering 326–348 has biased composition (polar residues); it reads SNATGAVESTSQAGDRGSVSSYD. Residues S343, S345, S346, S358, and S362 each carry the phosphoserine modification. Residues 382 to 441 form the SH3 domain; sequence AKGVRVRALYDYDGQEQDELSFKAGDELTKLGEEDEQGWCRGRLDSGQLGLYPANYVEAI. Y391 is modified (phosphotyrosine). Residues S402 and S427 each carry the phosphoserine modification.

This sequence belongs to the PACSIN family. As to quaternary structure, homodimer. May form heterooligomers with other PACSINs. Interacts with MAPT. Interacts with TRPV4. Interacts (via SH3 domain) with SYNJ1 and WASL. Interacts (via SH3 domain) with DNM1; the interaction is reduced by DNM1 phosphorylation. Interacts with DNM2 and DNM3. Interacts with both COBL and DBNL. Identified in a complex composed of COBL, PACSIN1 and WASL. Interacts with EHD1 and EHD3. Phosphorylated by casein kinase 2 (CK2) and protein kinase C (PKC). In terms of tissue distribution, highly expressed in brain (at protein level).

Its subcellular location is the cytoplasm. The protein localises to the cell projection. The protein resides in the synapse. It localises to the synaptosome. It is found in the ruffle membrane. Its subcellular location is the membrane. The protein localises to the cytoplasmic vesicle membrane. The protein resides in the cytosol. It localises to the cell membrane. Functionally, binds to membranes via its F-BAR domain and mediates membrane tubulation. Plays a role in the reorganization of the microtubule cytoskeleton via its interaction with MAPT; this decreases microtubule stability and inhibits MAPT-induced microtubule polymerization. Plays a role in cellular transport processes by recruiting DNM1, DNM2 and DNM3 to membranes. Plays a role in the reorganization of the actin cytoskeleton and in neuron morphogenesis via its interaction with COBL and WASL, and by recruiting COBL to the cell cortex. Plays a role in the regulation of neurite formation, neurite branching and the regulation of neurite length. Required for normal synaptic vesicle endocytosis; this process retrieves previously released neurotransmitters to accommodate multiple cycles of neurotransmission. Required for normal excitatory and inhibitory synaptic transmission. The polypeptide is Protein kinase C and casein kinase substrate in neurons protein 1 (Pacsin1) (Rattus norvegicus (Rat)).